The chain runs to 102 residues: Small ribosomal subunit protein uS10 (102 aa).

Belongs to the universal ribosomal protein uS10 family. As to quaternary structure, part of the 30S ribosomal subunit.

Functionally, involved in the binding of tRNA to the ribosomes. This Mesoplasma florum (strain ATCC 33453 / NBRC 100688 / NCTC 11704 / L1) (Acholeplasma florum) protein is Small ribosomal subunit protein uS10.